A 151-amino-acid chain; its full sequence is Ubiquitin-like protein 4A-B (151 aa).

The Ubiquitin-like domain maps to 1–76 (MILTIKPLKG…LNLVVRPAGE (76 aa)).

As to quaternary structure, component of the BAT3 complex.

The protein resides in the cytoplasm. Its subcellular location is the cytosol. Functionally, component of the BAT3 complex, a multiprotein complex involved in the post-translational delivery of tail-anchored (TA) membrane proteins to the endoplasmic reticulum membrane. TA membrane proteins, also named type II transmembrane proteins, contain a single C-terminal transmembrane region. The polypeptide is Ubiquitin-like protein 4A-B (ubl4ab) (Oncorhynchus mykiss (Rainbow trout)).